Consider the following 336-residue polypeptide: Holliday junction branch migration complex subunit RuvB (336 aa).

Residues alanine 4–tyrosine 185 form a large ATPase domain (RuvB-L) region. Residues isoleucine 24, arginine 25, glycine 66, lysine 69, threonine 70, threonine 71, glutamate 132–tyrosine 134, arginine 175, tyrosine 185, and arginine 222 each bind ATP. Threonine 70 contributes to the Mg(2+) binding site. The small ATPAse domain (RuvB-S) stretch occupies residues asparagine 186–asparagine 256. The interval alanine 259–proline 336 is head domain (RuvB-H). Residues arginine 295, arginine 314, and arginine 319 each contribute to the DNA site.

Belongs to the RuvB family. Homohexamer. Forms an RuvA(8)-RuvB(12)-Holliday junction (HJ) complex. HJ DNA is sandwiched between 2 RuvA tetramers; dsDNA enters through RuvA and exits via RuvB. An RuvB hexamer assembles on each DNA strand where it exits the tetramer. Each RuvB hexamer is contacted by two RuvA subunits (via domain III) on 2 adjacent RuvB subunits; this complex drives branch migration. In the full resolvosome a probable DNA-RuvA(4)-RuvB(12)-RuvC(2) complex forms which resolves the HJ.

It localises to the cytoplasm. It catalyses the reaction ATP + H2O = ADP + phosphate + H(+). The RuvA-RuvB-RuvC complex processes Holliday junction (HJ) DNA during genetic recombination and DNA repair, while the RuvA-RuvB complex plays an important role in the rescue of blocked DNA replication forks via replication fork reversal (RFR). RuvA specifically binds to HJ cruciform DNA, conferring on it an open structure. The RuvB hexamer acts as an ATP-dependent pump, pulling dsDNA into and through the RuvAB complex. RuvB forms 2 homohexamers on either side of HJ DNA bound by 1 or 2 RuvA tetramers; 4 subunits per hexamer contact DNA at a time. Coordinated motions by a converter formed by DNA-disengaged RuvB subunits stimulates ATP hydrolysis and nucleotide exchange. Immobilization of the converter enables RuvB to convert the ATP-contained energy into a lever motion, pulling 2 nucleotides of DNA out of the RuvA tetramer per ATP hydrolyzed, thus driving DNA branch migration. The RuvB motors rotate together with the DNA substrate, which together with the progressing nucleotide cycle form the mechanistic basis for DNA recombination by continuous HJ branch migration. Branch migration allows RuvC to scan DNA until it finds its consensus sequence, where it cleaves and resolves cruciform DNA. In Proteus mirabilis (strain HI4320), this protein is Holliday junction branch migration complex subunit RuvB.